Here is a 121-residue protein sequence, read N- to C-terminus: Large ribosomal subunit protein uL18 (121 aa).

This sequence belongs to the universal ribosomal protein uL18 family. Part of the 50S ribosomal subunit; part of the 5S rRNA/L5/L18/L25 subcomplex. Contacts the 5S and 23S rRNAs.

This is one of the proteins that bind and probably mediate the attachment of the 5S RNA into the large ribosomal subunit, where it forms part of the central protuberance. This Polaromonas naphthalenivorans (strain CJ2) protein is Large ribosomal subunit protein uL18.